A 92-amino-acid chain; its full sequence is DNA/RNA-binding protein Alba (92 aa).

K11 carries the N6-acetyllysine modification.

The protein belongs to the histone-like Alba family. Acetylated. Acetylation at Lys-11 decreases DNA-binding affinity.

It is found in the cytoplasm. It localises to the chromosome. Binds double-stranded DNA tightly but without sequence specificity. Involved in DNA compaction. This is DNA/RNA-binding protein Alba from Pyrobaculum neutrophilum (strain DSM 2338 / JCM 9278 / NBRC 100436 / V24Sta) (Thermoproteus neutrophilus).